Consider the following 968-residue polypeptide: RNA polymerase-associated protein RapA (968 aa).

Positions 164–334 constitute a Helicase ATP-binding domain; the sequence is DVGRRHAPRV…FARLRLLDPN (171 aa). Residue 177 to 184 coordinates ATP; that stretch reads DEVGLGKT. Residues 280–283 carry the DEAH box motif; the sequence is DEAH. Residues 490 to 662 enclose the Helicase C-terminal domain; that stretch reads RVEWLMGYLT…YLASPVQTEG (173 aa).

The protein belongs to the SNF2/RAD54 helicase family. RapA subfamily. As to quaternary structure, interacts with the RNAP. Has a higher affinity for the core RNAP than for the holoenzyme. Its ATPase activity is stimulated by binding to RNAP.

Transcription regulator that activates transcription by stimulating RNA polymerase (RNAP) recycling in case of stress conditions such as supercoiled DNA or high salt concentrations. Probably acts by releasing the RNAP, when it is trapped or immobilized on tightly supercoiled DNA. Does not activate transcription on linear DNA. Probably not involved in DNA repair. The polypeptide is RNA polymerase-associated protein RapA (Shigella sonnei (strain Ss046)).